The primary structure comprises 267 residues: 4-hydroxy-tetrahydrodipicolinate reductase (267 aa).

10–15 (GCLGKQ) contacts NAD(+). Residue Arg-37 participates in NADP(+) binding. Residues 99–101 (GTT) and 122–125 (TTNV) each bind NAD(+). The active-site Proton donor/acceptor is His-154. Residue His-155 participates in (S)-2,3,4,5-tetrahydrodipicolinate binding. Lys-158 acts as the Proton donor in catalysis. A (S)-2,3,4,5-tetrahydrodipicolinate-binding site is contributed by 164–165 (GT).

It belongs to the DapB family.

Its subcellular location is the cytoplasm. The catalysed reaction is (S)-2,3,4,5-tetrahydrodipicolinate + NAD(+) + H2O = (2S,4S)-4-hydroxy-2,3,4,5-tetrahydrodipicolinate + NADH + H(+). The enzyme catalyses (S)-2,3,4,5-tetrahydrodipicolinate + NADP(+) + H2O = (2S,4S)-4-hydroxy-2,3,4,5-tetrahydrodipicolinate + NADPH + H(+). The protein operates within amino-acid biosynthesis; L-lysine biosynthesis via DAP pathway; (S)-tetrahydrodipicolinate from L-aspartate: step 4/4. In terms of biological role, catalyzes the conversion of 4-hydroxy-tetrahydrodipicolinate (HTPA) to tetrahydrodipicolinate. In Ehrlichia canis (strain Jake), this protein is 4-hydroxy-tetrahydrodipicolinate reductase.